The chain runs to 350 residues: Calcium uniporter protein, mitochondrial (350 aa).

Residues 1-49 (MAAAAGRSLLLLLCSRGGGGGAGGCGALTAGCFPGLGVSRHRPHQQHRT) constitute a mitochondrion transit peptide. Residues 50-232 (AHQRPASWQS…ISRKAEKRTT (183 aa)) are Mitochondrial matrix-facing. A phosphoserine; by CaMK2 mark is found at Ser56 and Ser91. Residues 74–164 (VTVVYQNGLP…LTYHVRPPKR (91 aa)) form an N-terminal MCU domain region. An S-glutathionyl cysteine modification is found at Cys96. A coiled-coil region spans residues 191-220 (IEQHQLNKERELVERLEDLKQQLAPLEKVR). Residues 233 to 256 (LVLWGGLAYMATQFGILARLTWWE) form a helical membrane-spanning segment. Topologically, residues 257–264 (YSWDIMEP) are mitochondrial intermembrane. Positions 259 to 267 (WDIMEPVTY) match the Selectivity filter motif. Ca(2+) is bound at residue Glu263. Residues 265-282 (VTYFITYGSAMAMYAYFV) form a helical membrane-spanning segment. The Mitochondrial matrix portion of the chain corresponds to 283 to 350 (MTRQEYVYPE…LPLRQIGEKE (68 aa)). Positions 284 to 289 (TRQEYV) are juxtamembrane helix. The stretch at 310 to 338 (RFDLEKYNQLKDAIAQAEMDLKRLRDPLQ) forms a coiled coil. Residue Lys331 is modified to N6-acetyllysine.

The protein belongs to the MCU (TC 1.A.77) family. In terms of assembly, homotetramer. Component of the uniplex complex, composed of MCU, EMRE/SMDT1, MICU1 and MICU2 (or MICU3) in a 4:4:1:1 stoichiometry. Interacts with CCDC109B/MCUB; this inhibits channel activity. Interacts with MCUR1. Interactions with MICU1 and MCUR1 are mutually exclusive. Interacts with SLC25A23. Phosphorylation by CaMK2 in heart leads to increased MCU current. The regulation of MCU by CaMK2 is however subject to discussion: another group was unable to reproduce these results. Phosphorylated on tyrosines by PTK2B/PYK2, promoting oligomerization. In terms of processing, glutathionylation at Cys-96 in response to reactive oxygen species (ROS) promotes MCU higher-order assembly, leading to constitutive activation of the MCU channel and mitochondrial calcium overload. Post-translationally, undergoes proteolytic degradation by SPG7. Detected in heart muscle (at protein level). Expressed in skeletal muscle, heart, kidney, liver, brain, lung, white fat and spleen.

Its subcellular location is the mitochondrion inner membrane. The enzyme catalyses Ca(2+)(in) = Ca(2+)(out). MCU channel activity is regulated by the heterodimer composed of MICU1 and either MICU2 or MICU3, which act as calcium-sensors. At low calcium levels, MICU1 occludes the pore of the MCU channel, preventing mitochondrial calcium uptake. At higher calcium levels, calcium-binding to MICU1 and MICU2 (or MICU3) induces a conformational change that weakens MCU-MICU1 interactions and moves the MICU1-MICU2 heterodimer away from the pore, allowing calcium permeation through the channel. MCU channel activity is gated by EMRE/SMDT1 via the juxtamembrane helix loop. Inhibited by ruthenium red or its derivative Ru360. In terms of biological role, channel-forming and calcium-conducting subunit of the mitochondrial inner membrane calcium uniporter complex (uniplex), which mediates calcium uptake into the mitochondrial matrix. MCU channel activity is regulated by the calcium-sensor subunits of the uniplex MICU1 and MICU2 (or MICU3). Mitochondrial calcium homeostasis plays key roles in cellular physiology and regulates ATP production, cytoplasmic calcium signals and activation of cell death pathways. Involved in buffering the amplitude of systolic calcium rises in cardiomyocytes. While dispensable for baseline homeostatic cardiac function, acts as a key regulator of short-term mitochondrial calcium loading underlying a 'fight-or-flight' response during acute stress: acts by mediating a rapid increase of mitochondrial calcium in pacemaker cells. Participates in mitochondrial permeability transition during ischemia-reperfusion injury. Mitochondrial calcium uptake in skeletal muscle cells is involved in muscle size in adults. Regulates synaptic vesicle endocytosis kinetics in central nerve terminal. Regulates glucose-dependent insulin secretion in pancreatic beta-cells by regulating mitochondrial calcium uptake. Involved in antigen processing and presentation. The sequence is that of Calcium uniporter protein, mitochondrial from Mus musculus (Mouse).